Here is a 775-residue protein sequence, read N- to C-terminus: Endothelin-converting enzyme-like 1 (775 aa).

At 1–61 (MEAPYSMTAH…LPRWNRREVC (61 aa)) the chain is on the cytoplasmic side. Positions 30–52 (GTSLPPGFPRGSGRSASGSRSGL) are disordered. Over residues 32 to 52 (SLPPGFPRGSGRSASGSRSGL) the composition is skewed to low complexity. Residues 62–82 (LLSGLVFAAGLCAILAAMLAL) traverse the membrane as a helical; Signal-anchor for type II membrane protein segment. Over 83–775 (KYLGPGAAGG…MNPVHKCSVW (693 aa)) the chain is Lumenal. One can recognise a Peptidase M13 domain in the interval 99–775 (GCPERKAFAR…MNPVHKCSVW (677 aa)). 4 cysteine pairs are disulfide-bonded: cysteine 124–cysteine 760, cysteine 132–cysteine 720, cysteine 188–cysteine 441, and cysteine 649–cysteine 772. Residues asparagine 255 and asparagine 322 are each glycosylated (N-linked (GlcNAc...) asparagine). A Zn(2+)-binding site is contributed by histidine 612. Glutamate 613 is an active-site residue. Histidine 616 contacts Zn(2+). Residue asparagine 656 is glycosylated (N-linked (GlcNAc...) asparagine). Glutamate 672 serves as a coordination point for Zn(2+). Catalysis depends on aspartate 676, which acts as the Proton donor.

It belongs to the peptidase M13 family. The cofactor is Zn(2+).

It is found in the membrane. May contribute to the degradation of peptide hormones and be involved in the inactivation of neuronal peptides. The polypeptide is Endothelin-converting enzyme-like 1 (Ecel1) (Mus musculus (Mouse)).